The sequence spans 95 residues: uncharacterized protein (95 aa).

This is an uncharacterized protein from Caenorhabditis elegans.